The chain runs to 235 residues: Auracyanin-B (235 aa).

A compositionally biased stretch (low complexity) spans 1–21 (MSWRGSGRSNFRSRSSSNGGS). Disordered stretches follow at residues 1–27 (MSWRGSGRSNFRSRSSSNGGSTFSGGS) and 64–107 (ATPR…NVVN). An N-terminal signal peptide occupies residues 1 to 56 (MSWRGSGRSNFRSRSSSNGGSTFSGGSAGGPPLIVMMGLAFGAGLIMLIVMIASNA). A propeptide spanning residues 57–80 (TAGGFVAATPRPTATPRPTAAPAP) is cleaved from the precursor. The segment covering 69 to 86 (TATPRPTAAPAPTQPPAA) has biased composition (pro residues). Over residues 87–100 (QPTTAPATQAANAP) the composition is skewed to low complexity. One can recognise a Plastocyanin-like domain in the interval 111–235 (AQTVEVRAAP…GMKGTLTVTP (125 aa)). 4 residues coordinate Cu cation: His-152, Cys-217, His-222, and Met-227.

The protein belongs to the multicopper oxidase family. It depends on Cu cation as a cofactor. In terms of processing, glycosylated.

It is found in the cell membrane. In terms of biological role, probably a soluble electron acceptor for the integral membrane protein electron transfer alternative complex III (ACIII). This chain is Auracyanin-B, found in Chloroflexus aurantiacus (strain ATCC 29366 / DSM 635 / J-10-fl).